Here is a 208-residue protein sequence, read N- to C-terminus: Type 3 secretion system stator protein (208 aa).

It belongs to the SctL stator family. As to quaternary structure, the core secretion machinery of the T3SS is composed of approximately 20 different proteins, including cytoplasmic components, a base, an export apparatus and a needle. This subunit is part of the cytosolic complex.

The protein resides in the cytoplasm. Its function is as follows. Component of the type III secretion system (T3SS), also called injectisome, which is used to inject bacterial effector proteins into eukaryotic host cells. Acts as a regulator of the HrcN/SctN ATPase activity. In Sinorhizobium fredii (strain NBRC 101917 / NGR234), this protein is Type 3 secretion system stator protein.